Consider the following 493-residue polypeptide: Glutamyl-tRNA(Gln) amidotransferase subunit A (493 aa).

Active-site charge relay system residues include lysine 78 and serine 158. Catalysis depends on serine 182, which acts as the Acyl-ester intermediate.

The protein belongs to the amidase family. GatA subfamily. In terms of assembly, heterotrimer of A, B and C subunits.

It carries out the reaction L-glutamyl-tRNA(Gln) + L-glutamine + ATP + H2O = L-glutaminyl-tRNA(Gln) + L-glutamate + ADP + phosphate + H(+). Its function is as follows. Allows the formation of correctly charged Gln-tRNA(Gln) through the transamidation of misacylated Glu-tRNA(Gln) in organisms which lack glutaminyl-tRNA synthetase. The reaction takes place in the presence of glutamine and ATP through an activated gamma-phospho-Glu-tRNA(Gln). This chain is Glutamyl-tRNA(Gln) amidotransferase subunit A, found in Rickettsia africae (strain ESF-5).